A 626-amino-acid polypeptide reads, in one-letter code: Janus kinase and microtubule-interacting protein 1 (626 aa).

A disordered region spans residues 1 to 22 (MSKKGRSKGEKPEMETDAVQMA). The segment at 1-365 (MSKKGRSKGE…KIKNLTRENV (365 aa)) is mediates association with microtubules. 2 coiled-coil regions span residues 19 to 255 (VQMA…EAER) and 284 to 413 (ERDV…DDLS). Residues 365 to 626 (VEMKEKLSAQ…ILFEPKLKFM (262 aa)) form a mediates interaction with TYK2 and GABBR1 region. S382 bears the Phosphoserine mark. Residues 452–461 (ETLSETSYNT) show a composition bias toward polar residues. The tract at residues 452-477 (ETLSETSYNTDRTDRTPATPEEDLDD) is disordered. At T470 the chain carries Phosphothreonine. Positions 490–604 (QLTREYQALQ…EFRVLELEVR (115 aa)) form a coiled coil.

This sequence belongs to the JAKMIP family. In terms of assembly, homodimer. Forms a complex with GABBR1 and KIF5B/kinesin-1. Interacts with JAK1 and TYK2. Predominantly expressed in neural tissues and lymphoid cells (at protein level). Isoform 2, isoform 3 and isoform 4 are specifically expressed in brain and retina. Isoform 1 and isoform 5 are also detected in liver, lung and skeletal muscle. Also detected in testis and to a lower extent spleen and intestine.

It is found in the cytoplasm. The protein resides in the cytoskeleton. Its subcellular location is the membrane. In terms of biological role, associates with microtubules and may play a role in the microtubule-dependent transport of the GABA-B receptor. May play a role in JAK1 signaling and regulate microtubule cytoskeleton rearrangements. In Homo sapiens (Human), this protein is Janus kinase and microtubule-interacting protein 1 (JAKMIP1).